A 270-amino-acid chain; its full sequence is Glutamate racemase (270 aa).

Substrate is bound by residues 7–8 (DS) and 39–40 (YG). Residue Cys-70 is the Proton donor/acceptor of the active site. 71-72 (NT) contributes to the substrate binding site. The Proton donor/acceptor role is filled by Cys-194. 195–196 (TH) contacts substrate.

It belongs to the aspartate/glutamate racemases family.

It catalyses the reaction L-glutamate = D-glutamate. Its pathway is cell wall biogenesis; peptidoglycan biosynthesis. In terms of biological role, provides the (R)-glutamate required for cell wall biosynthesis. The protein is Glutamate racemase of Jannaschia sp. (strain CCS1).